Here is a 428-residue protein sequence, read N- to C-terminus: MRRCAVLHRLRCKFYVFVVSLFVVVKLVYLKISMDNSIYIEPYGVTRRSLKPQPLDGINCTAIYDLEPVEIGKSLEMRRKKIVEVDDGRIASFTADCKSYIEQRRYNEVLVTDEECNFPIAYSLVVHKNSAMVERILRAIYAPQNIYCIHYDQKSTKDFIAAMKNLESCFPNVFIASKIESVQYAHITRLKADLNCLSDLLSSEVKWKYVINLCGQDFPLKSNYELVTELRKLNGANMLETSRPSKVKKQRFQFRYQLKDVSYEYQKMPVKTSIAKDPPPHNIEMFVGSAYFVLSRDFVTYVMNNQLAKDFLQWSVDTYSPDEHFWASMARVPGVPGELARSEPDVSDLKSRTRLVKWNYLEERLYPKCTGTHRRSVCIYGAAELRWLLEDGHWFANKFDPKVDPVIIKCLEEKLEEKQLQQCLRRVS.

The Cytoplasmic portion of the chain corresponds to 1–12; that stretch reads MRRCAVLHRLRC. The helical; Signal-anchor for type II membrane protein transmembrane segment at 13-30 threads the bilayer; sequence KFYVFVVSLFVVVKLVYL. At 31-428 the chain is on the lumenal side; the sequence is KISMDNSIYI…QLQQCLRRVS (398 aa). The N-linked (GlcNAc...) asparagine glycan is linked to asparagine 59. Intrachain disulfides connect cysteine 60/cysteine 214, cysteine 148/cysteine 369, cysteine 169/cysteine 196, and cysteine 378/cysteine 410.

Belongs to the glycosyltransferase 14 family.

The protein localises to the golgi apparatus membrane. The enzyme catalyses a 3-O-[beta-D-galactosyl-(1-&gt;3)-N-acetyl-alpha-D-galactosaminyl]-L-seryl-[protein] + UDP-N-acetyl-alpha-D-glucosamine = 3-O-{beta-D-galactosyl-(1-&gt;3)-[N-acetyl-beta-D-glucosaminyl-(1-&gt;6)]-N-acetyl-alpha-D-galactosaminyl}-L-seryl-[protein] + UDP + H(+). The catalysed reaction is a 3-O-[beta-D-galactosyl-(1-&gt;3)-N-acetyl-alpha-D-galactosaminyl]-L-threonyl-[protein] + UDP-N-acetyl-alpha-D-glucosamine = a 3-O-{beta-D-galactosyl-(1-&gt;3)-[N-acetyl-beta-D-glucosaminyl-(1-&gt;6)]-N-acetyl-alpha-D-galactosaminyl}-L-threonyl-[protein] + UDP + H(+). It participates in protein modification; protein glycosylation. Functionally, glycosyltransferase that mediates core 2 O-glycan branching, an important step in mucin-type biosynthesis. The protein is Beta-1,3-galactosyl-O-glycosyl-glycoprotein beta-1,6-N-acetylglucosaminyltransferase 4 (gcnt4) of Danio rerio (Zebrafish).